The chain runs to 379 residues: Chaperone protein DnaJ (379 aa).

The 66-residue stretch at 6–71 folds into the J domain; that stretch reads DYYEVLGVDK…QKRSRYDQFG (66 aa). The CR-type zinc-finger motif lies at 138–220; the sequence is GVEREINVSK…CNGKGRLRST (83 aa). The Zn(2+) site is built by Cys-151, Cys-154, Cys-168, Cys-171, Cys-194, Cys-197, Cys-208, and Cys-211. CXXCXGXG motif repeat units follow at residues 151-158, 168-175, 194-201, and 208-215; these read CSKCTGSG, CNHCNGTG, CDACKGEG, and CPACNGKG.

The protein belongs to the DnaJ family. As to quaternary structure, homodimer. Requires Zn(2+) as cofactor.

The protein localises to the cytoplasm. Its function is as follows. Participates actively in the response to hyperosmotic and heat shock by preventing the aggregation of stress-denatured proteins and by disaggregating proteins, also in an autonomous, DnaK-independent fashion. Unfolded proteins bind initially to DnaJ; upon interaction with the DnaJ-bound protein, DnaK hydrolyzes its bound ATP, resulting in the formation of a stable complex. GrpE releases ADP from DnaK; ATP binding to DnaK triggers the release of the substrate protein, thus completing the reaction cycle. Several rounds of ATP-dependent interactions between DnaJ, DnaK and GrpE are required for fully efficient folding. Also involved, together with DnaK and GrpE, in the DNA replication of plasmids through activation of initiation proteins. The sequence is that of Chaperone protein DnaJ from Ruminiclostridium cellulolyticum (strain ATCC 35319 / DSM 5812 / JCM 6584 / H10) (Clostridium cellulolyticum).